The chain runs to 432 residues: E3 ubiquitin-protein ligase ATL42 (432 aa).

The first 18 residues, 1–18, serve as a signal peptide directing secretion; sequence MYQIFFFFLPLLHSYASA. Residues 37–57 form a helical membrane-spanning segment; sequence LAVVTGVLAIMFALTFVLLVY. The RING-type; atypical zinc-finger motif lies at 123 to 165; that stretch reads CSVCLSKFESVEILRLLPKCRHAFHIGCIDQWLEQHATCPLCR.

This sequence belongs to the RING-type zinc finger family. ATL subfamily.

It is found in the membrane. It catalyses the reaction S-ubiquitinyl-[E2 ubiquitin-conjugating enzyme]-L-cysteine + [acceptor protein]-L-lysine = [E2 ubiquitin-conjugating enzyme]-L-cysteine + N(6)-ubiquitinyl-[acceptor protein]-L-lysine.. It participates in protein modification; protein ubiquitination. Functionally, E3 ubiquitin-protein ligase able to catalyze polyubiquitination with ubiquitin-conjugating enzyme E2 UBC8 in vitro. This is E3 ubiquitin-protein ligase ATL42 (ATL42) from Arabidopsis thaliana (Mouse-ear cress).